Here is a 95-residue protein sequence, read N- to C-terminus: Integration host factor subunit beta (95 aa).

The disordered stretch occupies residues 52–95 (SLHHRPPRVGRNPKTGESVHLPSRRVPHFKPGKELRDRVNSIKD). Residues 82–95 (PGKELRDRVNSIKD) show a composition bias toward basic and acidic residues.

It belongs to the bacterial histone-like protein family. Heterodimer of an alpha and a beta chain.

Functionally, this protein is one of the two subunits of integration host factor, a specific DNA-binding protein that functions in genetic recombination as well as in transcriptional and translational control. The sequence is that of Integration host factor subunit beta from Methylococcus capsulatus (strain ATCC 33009 / NCIMB 11132 / Bath).